Here is a 419-residue protein sequence, read N- to C-terminus: UDP-N-acetylglucosamine 1-carboxyvinyltransferase (419 aa).

22-23 contributes to the phosphoenolpyruvate binding site; it reads KN. Arg91 serves as a coordination point for UDP-N-acetyl-alpha-D-glucosamine. Residue Cys115 is the Proton donor of the active site. The residue at position 115 (Cys115) is a 2-(S-cysteinyl)pyruvic acid O-phosphothioketal. Residues 120–124, 160–163, Asp305, and Val327 contribute to the UDP-N-acetyl-alpha-D-glucosamine site; these read RPVDL and KVSV.

Belongs to the EPSP synthase family. MurA subfamily.

Its subcellular location is the cytoplasm. The catalysed reaction is phosphoenolpyruvate + UDP-N-acetyl-alpha-D-glucosamine = UDP-N-acetyl-3-O-(1-carboxyvinyl)-alpha-D-glucosamine + phosphate. It functions in the pathway cell wall biogenesis; peptidoglycan biosynthesis. Functionally, cell wall formation. Adds enolpyruvyl to UDP-N-acetylglucosamine. The chain is UDP-N-acetylglucosamine 1-carboxyvinyltransferase from Escherichia fergusonii (strain ATCC 35469 / DSM 13698 / CCUG 18766 / IAM 14443 / JCM 21226 / LMG 7866 / NBRC 102419 / NCTC 12128 / CDC 0568-73).